Reading from the N-terminus, the 111-residue chain is Large ribosomal subunit protein uL23 (111 aa).

Belongs to the universal ribosomal protein uL23 family. Part of the 50S ribosomal subunit. Contacts protein L29, and trigger factor when it is bound to the ribosome.

Functionally, one of the early assembly proteins it binds 23S rRNA. One of the proteins that surrounds the polypeptide exit tunnel on the outside of the ribosome. Forms the main docking site for trigger factor binding to the ribosome. This chain is Large ribosomal subunit protein uL23, found in Chlamydia trachomatis serovar L2 (strain ATCC VR-902B / DSM 19102 / 434/Bu).